Consider the following 312-residue polypeptide: DNA-directed RNA polymerase subunit alpha (312 aa).

Positions 1–229 are alpha N-terminal domain (alpha-NTD); it reads MLQYQIDRIE…ELFQPLATVT (229 aa). The interval 236-312 is alpha C-terminal domain (alpha-CTD); the sequence is IEPEPSAEAQ…ISIPQSRTSV (77 aa).

Belongs to the RNA polymerase alpha chain family. In cyanobacteria the RNAP catalytic core is composed of 2 alpha, 1 beta, 1 beta', 1 gamma and 1 omega subunit. When a sigma factor is associated with the core the holoenzyme is formed, which can initiate transcription.

It catalyses the reaction RNA(n) + a ribonucleoside 5'-triphosphate = RNA(n+1) + diphosphate. DNA-dependent RNA polymerase catalyzes the transcription of DNA into RNA using the four ribonucleoside triphosphates as substrates. The sequence is that of DNA-directed RNA polymerase subunit alpha from Synechococcus sp. (strain CC9311).